Consider the following 199-residue polypeptide: dITP/XTP pyrophosphatase (199 aa).

7 to 12 lines the substrate pocket; the sequence is TSNRGK. Asp-74 serves as the catalytic Proton acceptor. Asp-74 serves as a coordination point for Mg(2+). Substrate contacts are provided by residues Ser-75, 156–159, Lys-179, and 184–185; these read FGYD and HR.

This sequence belongs to the HAM1 NTPase family. In terms of assembly, homodimer. Mg(2+) serves as cofactor.

It carries out the reaction XTP + H2O = XMP + diphosphate + H(+). The catalysed reaction is dITP + H2O = dIMP + diphosphate + H(+). It catalyses the reaction ITP + H2O = IMP + diphosphate + H(+). Pyrophosphatase that catalyzes the hydrolysis of nucleoside triphosphates to their monophosphate derivatives, with a high preference for the non-canonical purine nucleotides XTP (xanthosine triphosphate), dITP (deoxyinosine triphosphate) and ITP. Seems to function as a house-cleaning enzyme that removes non-canonical purine nucleotides from the nucleotide pool, thus preventing their incorporation into DNA/RNA and avoiding chromosomal lesions. This chain is dITP/XTP pyrophosphatase, found in Sulfurimonas denitrificans (strain ATCC 33889 / DSM 1251) (Thiomicrospira denitrificans (strain ATCC 33889 / DSM 1251)).